The chain runs to 130 residues: Profilin-1 (130 aa).

This sequence belongs to the profilin family. Interacts with actin. Interacts with RHO1 (GTP-bound form).

The protein localises to the cytoplasm. Its subcellular location is the cytoskeleton. It is found in the cell projection. It localises to the phagocytic cup. The protein resides in the cytoplasmic vesicle. The protein localises to the phagosome. In terms of biological role, binds to actin and affects the structure of the cytoskeleton. At high concentrations, profilin prevents the polymerization of actin, whereas it enhances it at low concentrations. By binding to PIP2, it inhibits the formation of IP3 and DG. In Entamoeba histolytica (strain ATCC 30459 / HM-1:IMSS / ABRM), this protein is Profilin-1.